Here is a 281-residue protein sequence, read N- to C-terminus: ATP phosphoribosyltransferase (281 aa).

This sequence belongs to the ATP phosphoribosyltransferase family. Long subfamily. Equilibrium between an active dimeric form, an inactive hexameric form and higher aggregates. Interconversion between the various forms is largely reversible and is influenced by the natural substrates and inhibitors of the enzyme. Requires Mg(2+) as cofactor.

It localises to the cytoplasm. It carries out the reaction 1-(5-phospho-beta-D-ribosyl)-ATP + diphosphate = 5-phospho-alpha-D-ribose 1-diphosphate + ATP. Its pathway is amino-acid biosynthesis; L-histidine biosynthesis; L-histidine from 5-phospho-alpha-D-ribose 1-diphosphate: step 1/9. Feedback inhibited by histidine. In terms of biological role, catalyzes the condensation of ATP and 5-phosphoribose 1-diphosphate to form N'-(5'-phosphoribosyl)-ATP (PR-ATP). Has a crucial role in the pathway because the rate of histidine biosynthesis seems to be controlled primarily by regulation of HisG enzymatic activity. The protein is ATP phosphoribosyltransferase of Mycolicibacterium gilvum (strain PYR-GCK) (Mycobacterium gilvum (strain PYR-GCK)).